The primary structure comprises 540 residues: MRTDDPVIGNDGDAPRYKNLMLKPGTQMRGMFEKIPFPLDFKLYLFHVTNPDVVMKGGKPRVREIGPYFFEEWKEKYDTVDNEEDDTLTFTLKNTWIFRPDLSKPLTGDEMITIPHPLILGALLMVQRDREAMMPLVSKGMDIIMNPLTTGFLTTRVMDLLFDGILIDCSSHEFSAKALCSGLESEGAVMPFNETHFKFSMFGLKNGTDAGRWVVYRGVKNIMDLGRVVSFNDETEMDIYDGDECNRYIGTDSTIFPPFLTTKDKLWAWSPEICRSIGAEYGGKSKYAGLPMSFFKLDFGDARNEPEHHCFCRDPPDICPPKGTIDLAPCLGAPIIGSKPHFYDSDPKLLAAVDGLTPNEKDHDVYIHFQLLSGTPVSAAKRLMFSMEIEPIRDHAVLGNLPTVILPLFWAEEGASLNKTWTNQLKYTLFLGLRFNTAVKWLTIIIGTIGTIVGGFMHYKRTTKMVNVTPVQSVNGSSAKGKGAGMTVVGHQPDSKGGSVTAPVIPSAKDLLQNSRNLPTVIEGLDKPQKVTVTEMQERY.

Residues 1 to 105 (MRTDDPVIGN…WIFRPDLSKP (105 aa)) lie on the Cytoplasmic side of the membrane. Residues 106–126 (LTGDEMITIPHPLILGALLMV) form a helical membrane-spanning segment. At 127 to 436 (QRDREAMMPL…YTLFLGLRFN (310 aa)) the chain is on the extracellular side. N-linked (GlcNAc...) asparagine glycosylation is found at N193 and N206. 3 disulfides stabilise this stretch: C245–C310, C274–C330, and C312–C319. N-linked (GlcNAc...) asparagine glycosylation occurs at N418. A helical membrane pass occupies residues 437-457 (TAVKWLTIIIGTIGTIVGGFM). Residues 458-540 (HYKRTTKMVN…VTVTEMQERY (83 aa)) lie on the Cytoplasmic side of the membrane.

It belongs to the CD36 family.

It is found in the cell membrane. Its function is as follows. Plays an olfactory role that is not restricted to pheromone sensitivity. The chain is Sensory neuron membrane protein 1 from Aedes aegypti (Yellowfever mosquito).